Here is a 225-residue protein sequence, read N- to C-terminus: UPF0758 protein Sez_1052 (225 aa).

One can recognise an MPN domain in the interval 102–224 (PVLSSAQVAE…YYSFREKSDL (123 aa)). Residues His173, His175, and Asp186 each coordinate Zn(2+). The short motif at 173-186 (HNHPSGLTKPSAND) is the JAMM motif element.

Belongs to the UPF0758 family.

In Streptococcus equi subsp. zooepidemicus (strain MGCS10565), this protein is UPF0758 protein Sez_1052.